The chain runs to 116 residues: uncharacterized protein (116 aa).

This is an uncharacterized protein from Bacillus subtilis (strain 168).